Reading from the N-terminus, the 365-residue chain is Probable UDP-arabinopyranose mutase 1 (365 aa).

Residues 100–102 (DDD) carry the DXD motif motif. A glycan (N-linked (Glc...) arginine) is linked at Arg148.

This sequence belongs to the RGP family. In terms of assembly, homopentamer or homohexamer. Mn(2+) is required as a cofactor. Mg(2+) serves as cofactor. In terms of processing, reversibly glycosylated by UDP-glucose, UDP-xylose and UDP-galactose, but not UDP-mannose. As to expression, expressed in all tissues tested, including root, tuber, leaf, petiole, shoot, stolon and stem.

Its subcellular location is the secreted. The protein resides in the cell wall. It is found in the cell junction. The protein localises to the plasmodesma. It localises to the golgi apparatus. It catalyses the reaction UDP-beta-L-arabinofuranose = UDP-beta-L-arabinopyranose. In terms of biological role, probable UDP-L-arabinose mutase involved in the biosynthesis of cell wall non-cellulosic polysaccharides. Was initially shown to possess an autoglycosylating activity which is dependent on the presence of UDP-glucose and manganese. The polypeptide is Probable UDP-arabinopyranose mutase 1 (Solanum tuberosum (Potato)).